The primary structure comprises 50 residues: ATP synthase protein 8 (50 aa).

A helical membrane pass occupies residues 13-32 (ITFTFIILAITVYILSKYIL).

It belongs to the ATPase protein 8 family. As to quaternary structure, F-type ATPases have 2 components, CF(1) - the catalytic core - and CF(0) - the membrane proton channel.

Its subcellular location is the mitochondrion membrane. Its function is as follows. Mitochondrial membrane ATP synthase (F(1)F(0) ATP synthase or Complex V) produces ATP from ADP in the presence of a proton gradient across the membrane which is generated by electron transport complexes of the respiratory chain. F-type ATPases consist of two structural domains, F(1) - containing the extramembraneous catalytic core and F(0) - containing the membrane proton channel, linked together by a central stalk and a peripheral stalk. During catalysis, ATP synthesis in the catalytic domain of F(1) is coupled via a rotary mechanism of the central stalk subunits to proton translocation. Part of the complex F(0) domain. Minor subunit located with subunit a in the membrane. The protein is ATP synthase protein 8 (ATP8) of Podospora anserina (strain S / ATCC MYA-4624 / DSM 980 / FGSC 10383) (Pleurage anserina).